Consider the following 139-residue polypeptide: ATP synthase epsilon chain (139 aa).

It belongs to the ATPase epsilon chain family. F-type ATPases have 2 components, CF(1) - the catalytic core - and CF(0) - the membrane proton channel. CF(1) has five subunits: alpha(3), beta(3), gamma(1), delta(1), epsilon(1). CF(0) has three main subunits: a, b and c.

Its subcellular location is the cell membrane. Functionally, produces ATP from ADP in the presence of a proton gradient across the membrane. The chain is ATP synthase epsilon chain from Symbiobacterium thermophilum (strain DSM 24528 / JCM 14929 / IAM 14863 / T).